The following is a 447-amino-acid chain: Na(+)-translocating NADH-quinone reductase subunit A (447 aa).

The protein belongs to the NqrA family. Composed of six subunits; NqrA, NqrB, NqrC, NqrD, NqrE and NqrF.

It carries out the reaction a ubiquinone + n Na(+)(in) + NADH + H(+) = a ubiquinol + n Na(+)(out) + NAD(+). Its function is as follows. NQR complex catalyzes the reduction of ubiquinone-1 to ubiquinol by two successive reactions, coupled with the transport of Na(+) ions from the cytoplasm to the periplasm. NqrA to NqrE are probably involved in the second step, the conversion of ubisemiquinone to ubiquinol. The sequence is that of Na(+)-translocating NADH-quinone reductase subunit A from Neisseria meningitidis serogroup B (strain ATCC BAA-335 / MC58).